The sequence spans 275 residues: MHQQLQNIIETAFERRADITPANADTVTREAVNQAINLLDSGALRVAEKIDGQWVTHQWLKKAVLLSFRINDNQLIEGGETRFFDKVPMKFADYDEARFQREGVRVAPPASVRRGAYIARNTVLMPSYVNIGAYVDEGTMVDTWVTVGSCAQIGKNVHLSGGVGIGGVLEPLQANPTIIEDNCFIGARSEVVEGVVVEEGSVISMGVFISQSTRIYDRETGEIHYGRVPAGSVVVSGNLPSKDGSHSMYCAIIVKKVDAKTRGKVGINELLRSID.

Substrate contacts are provided by arginine 105 and aspartate 142.

The protein belongs to the transferase hexapeptide repeat family. In terms of assembly, homotrimer.

It localises to the cytoplasm. It carries out the reaction (S)-2,3,4,5-tetrahydrodipicolinate + succinyl-CoA + H2O = (S)-2-succinylamino-6-oxoheptanedioate + CoA. The protein operates within amino-acid biosynthesis; L-lysine biosynthesis via DAP pathway; LL-2,6-diaminopimelate from (S)-tetrahydrodipicolinate (succinylase route): step 1/3. The sequence is that of 2,3,4,5-tetrahydropyridine-2,6-dicarboxylate N-succinyltransferase from Pectobacterium atrosepticum (strain SCRI 1043 / ATCC BAA-672) (Erwinia carotovora subsp. atroseptica).